The sequence spans 296 residues: Magnetosome protein MamB (296 aa).

Residues 1–12 are Cytoplasmic-facing; it reads MKFENCRDCREE. The interval 1 to 214 is transmembrane domain (TMD); sequence MKFENCRDCR…GLMDSSVDTE (214 aa). The chain crosses the membrane as a helical span at residues 13–33; the sequence is VVWWAFTADICMTLFKGVLGL. Over 34 to 83 the chain is Lumenal; it reads MSGSVALVADSLHSGADVVASGVTQLSLKISNKPADERYPFGYGNIQYIS. A helical transmembrane segment spans residues 84–104; that stretch reads SSIVGSLLLIGASFLMYGSVM. The Cytoplasmic segment spans residues 105 to 112; that stretch reads KLISGTYE. A helical membrane pass occupies residues 113–133; that stretch reads APSIFAAVGASVTVIVNELMY. Over 134–164 the chain is Lumenal; sequence RYQICVGNENNSPAIIANAWDNRSDAISSAA. A helical transmembrane segment spans residues 165–185; sequence VMVGVIASVIGFPIADTIAAI. The Cytoplasmic segment spans residues 186 to 296; the sequence is GVSALVGRIG…SPAPAAAARA (111 aa). Residues 215 to 296 are C-terminal domain (CTD); the sequence is LLQTAWQVAM…SPAPAAAARA (82 aa).

Belongs to the cation diffusion facilitator (CDF) transporter (TC 2.A.4) family. Forms heterodimers with MamM. Probably interacts with MamE.

Its subcellular location is the magnetosome membrane. Its function is as follows. Plays a dual, essential role in magnetosome formation; required for magnetosome vesicle formation as well as biomineralization. Probably binds and transports iron. Requires heterodimerization with MamM for stability. The protein is Magnetosome protein MamB (mamB) of Paramagnetospirillum magneticum (strain ATCC 700264 / AMB-1) (Magnetospirillum magneticum).